The chain runs to 1494 residues: Ral GTPase-activating protein subunit beta (1494 aa).

2 disordered regions span residues 355–437 (PRSD…APRR) and 709–738 (ENNL…PDSE). At serine 359 the chain carries Phosphoserine. Residues threonine 363 and threonine 379 each carry the phosphothreonine modification. Polar residues-rich tracts occupy residues 369-381 (SMPQ…TTPP), 392-428 (NKAT…TSSE), and 711-735 (NLKS…PTTP). Phosphoserine occurs at positions 421 and 720. Threonine 734 is subject to Phosphothreonine. One can recognise a Rap-GAP domain in the interval 1149-1392 (IGYLDLLPCR…TTLEKEVPVI (244 aa)). The residue at position 1285 (serine 1285) is a Phosphoserine. Residues 1312-1323 (NLNSSQRLSPSS) are compositionally biased toward polar residues. The disordered stretch occupies residues 1312–1335 (NLNSSQRLSPSSRMRKLPQGRPVP).

As to quaternary structure, component of the heterodimeric RalGAP1 complex with RALGAPA1 and of the heterodimeric RalGAP2 complex with RALGAPA2. Heterodimerization is required for activity. As to expression, highly expressed in brain, mostly in amygdala.

Functionally, non-catalytic subunit of the heterodimeric RalGAP1 and RalGAP2 complexes which act as GTPase activators for the Ras-like small GTPases RALA and RALB. The sequence is that of Ral GTPase-activating protein subunit beta (RALGAPB) from Homo sapiens (Human).